The sequence spans 131 residues: Putative gamma-taxilin 2 (131 aa).

The protein belongs to the taxilin family.

The sequence is that of Putative gamma-taxilin 2 (TXLNGY) from Pan troglodytes (Chimpanzee).